Here is a 663-residue protein sequence, read N- to C-terminus: Glutamate-rich protein 6 (663 aa).

Disordered regions lie at residues methionine 1 to serine 74 and leucine 106 to phenylalanine 136. Acidic residues predominate over residues glutamate 20 to alanine 69. Low complexity predominate over residues proline 112–serine 132.

This sequence belongs to the ERICH6 family.

It is found in the nucleus. This chain is Glutamate-rich protein 6 (ERICH6), found in Homo sapiens (Human).